Here is a 327-residue protein sequence, read N- to C-terminus: Flap endonuclease 1 (327 aa).

An N-domain region spans residues 1-98; sequence MGVKLKDIIQ…ETIDQRRQTR (98 aa). Mg(2+) is bound by residues Asp-27, Asp-80, Glu-152, Glu-154, Asp-173, Asp-175, and Asp-226. The interval 116–246 is I-domain; it reads EARKYAMRSS…KTALKLAKKG (131 aa). The tract at residues 319–327 is interaction with PCNA; sequence SQKSLEDWF.

It belongs to the XPG/RAD2 endonuclease family. FEN1 subfamily. Interacts with PCNA. PCNA stimulates the nuclease activity without altering cleavage specificity. The cofactor is Mg(2+).

Its function is as follows. Structure-specific nuclease with 5'-flap endonuclease and 5'-3' exonuclease activities involved in DNA replication and repair. During DNA replication, cleaves the 5'-overhanging flap structure that is generated by displacement synthesis when DNA polymerase encounters the 5'-end of a downstream Okazaki fragment. Binds the unpaired 3'-DNA end and kinks the DNA to facilitate 5' cleavage specificity. Cleaves one nucleotide into the double-stranded DNA from the junction in flap DNA, leaving a nick for ligation. Also involved in the base excision repair (BER) pathway. Acts as a genome stabilization factor that prevents flaps from equilibrating into structures that lead to duplications and deletions. Also possesses 5'-3' exonuclease activity on nicked or gapped double-stranded DNA. The sequence is that of Flap endonuclease 1 from Methanobrevibacter smithii (strain ATCC 35061 / DSM 861 / OCM 144 / PS).